The primary structure comprises 375 residues: MPAEMKSAASGSDPRSSGERDKALNLVLGQIERNFGKGSIMRLGDASRMRVETISTGALTLDLALGGGYPKGRVVEIYGPESSGKTTLTLHAIAEVQKRGGVAAFVDAEHALDPVYAASLGVDVENLLVSQPDTGEMALEIVDQLVRSAAVDIVVIDSVAALTPRAEIEGEMGDLAVGSQARLMSQAMRKITGNIGKSGCTVIFLNQLRLKIGVTYGNPETTTGGNALKFYASVRLDIRRIQTLKKGTEEFGIRAKVKVAKNKVAPPFRIAEFDILFGRGISTLGCLLDLAEETGVVIRKGAWYSYEGDNIGQGRDNTITWMEENPEAAITIEQLVRQKLTEGSEVKANSMKPLAAAARTAAAAAPKATADEAAA.

The disordered stretch occupies residues Met-1–Arg-20. Gly-79–Thr-86 contacts ATP.

The protein belongs to the RecA family.

Its subcellular location is the cytoplasm. In terms of biological role, can catalyze the hydrolysis of ATP in the presence of single-stranded DNA, the ATP-dependent uptake of single-stranded DNA by duplex DNA, and the ATP-dependent hybridization of homologous single-stranded DNAs. It interacts with LexA causing its activation and leading to its autocatalytic cleavage. The polypeptide is Protein RecA (Parasynechococcus marenigrum (strain WH8102)).